Reading from the N-terminus, the 311-residue chain is Malate dehydrogenase (311 aa).

NAD(+) contacts are provided by residues 7–13 (GAAGGIG) and Asp-34. Substrate contacts are provided by Arg-81 and Arg-87. NAD(+) contacts are provided by residues Asn-94 and 117–119 (ITN). Positions 119 and 153 each coordinate substrate. The active-site Proton acceptor is the His-177. NAD(+) is bound at residue Met-227.

The protein belongs to the LDH/MDH superfamily. MDH type 1 family. Homodimer.

The enzyme catalyses (S)-malate + NAD(+) = oxaloacetate + NADH + H(+). Catalyzes the reversible oxidation of malate to oxaloacetate. In Haemophilus influenzae (strain PittGG), this protein is Malate dehydrogenase.